A 266-amino-acid chain; its full sequence is Luciferase (266 aa).

Residues 22-41 (GLATACCAVAVASAIAFPYI) form a helical membrane-spanning segment.

This sequence belongs to the fungal luciferase family.

It is found in the membrane. It catalyses the reaction 3-hydroxyhispidin + O2 = (E)-caffeoylpyruvate + hnu + CO2. The enzyme catalyses 3-hydroxyhispidin + O2 = 4-[(E)-2-(3,4-dihydroxyphenyl)ethenyl]-1,7-dihydroxy-2,3,5-trioxabicyclo[2.2.2]oct-7-en-6-one. Its function is as follows. Luciferase; part of the gene cluster that mediates the fungal bioluminescence cycle. Uses the fungal luciferin 3-hydroxyhispidin as a substrate to produce an endoperoxide as a high-energy intermediate with decomposition that yields oxyluciferin (also known as caffeoylpyruvate) and light emission. The fungal bioluminescence cycle begins with the hispidin synthetase that catalyzes the formation of hispidin which is further hydroxylated by the hispidin-3-hydroxylase, yielding the fungal luciferin 3-hydroxyhispidin. The luciferase then produces an endoperoxide as a high-energy intermediate with decomposition that yields oxyluciferin and light emission. Oxyluciferin can be recycled to caffeic acid by caffeoylpyruvate hydrolase. This Armillaria ostoyae (Armillaria root rot fungus) protein is Luciferase.